The sequence spans 388 residues: Mannitol-1-phosphate 5-dehydrogenase (388 aa).

Residue 5–16 (AIQFGGGNIGRG) participates in NAD(+) binding. Residue Lys-213 is part of the active site.

The protein belongs to the mannitol dehydrogenase family. In terms of assembly, monomer.

It catalyses the reaction D-mannitol 1-phosphate + NAD(+) = beta-D-fructose 6-phosphate + NADH + H(+). Catalyzes the NAD(H)-dependent interconversion of D-fructose 6-phosphate and D-mannitol 1-phosphate in the mannitol metabolic pathway. The polypeptide is Mannitol-1-phosphate 5-dehydrogenase (mpdA) (Neosartorya fischeri (strain ATCC 1020 / DSM 3700 / CBS 544.65 / FGSC A1164 / JCM 1740 / NRRL 181 / WB 181) (Aspergillus fischerianus)).